A 900-amino-acid chain; its full sequence is DNA mismatch repair protein MutS (900 aa).

Residues 1–88 (MPGPSDDPTE…PAWAHHSQVD (88 aa)) are disordered. Basic and acidic residues predominate over residues 56-68 (APADHNAADHDSN). Residue 714 to 721 (GPNASGKS) participates in ATP binding.

It belongs to the DNA mismatch repair MutS family.

This protein is involved in the repair of mismatches in DNA. It is possible that it carries out the mismatch recognition step. This protein has a weak ATPase activity. The sequence is that of DNA mismatch repair protein MutS from Parasynechococcus marenigrum (strain WH8102).